A 118-amino-acid polypeptide reads, in one-letter code: NADH-ubiquinone oxidoreductase chain 3 (118 aa).

3 helical membrane passes run 7–27 (ICIS…VPFL), 62–82 (LVSI…PWAV), and 87–107 (IDLF…IGFL).

It belongs to the complex I subunit 3 family.

The protein resides in the mitochondrion membrane. The catalysed reaction is a ubiquinone + NADH + 5 H(+)(in) = a ubiquinol + NAD(+) + 4 H(+)(out). Core subunit of the mitochondrial membrane respiratory chain NADH dehydrogenase (Complex I) that is believed to belong to the minimal assembly required for catalysis. Complex I functions in the transfer of electrons from NADH to the respiratory chain. The immediate electron acceptor for the enzyme is believed to be ubiquinone. This Oenothera berteroana (Bertero's evening primrose) protein is NADH-ubiquinone oxidoreductase chain 3 (ND3).